Reading from the N-terminus, the 428-residue chain is Tryptophan synthase beta chain (428 aa).

Lys-100 is modified (N6-(pyridoxal phosphate)lysine).

Belongs to the TrpB family. Tetramer of two alpha and two beta chains. Requires pyridoxal 5'-phosphate as cofactor.

The enzyme catalyses (1S,2R)-1-C-(indol-3-yl)glycerol 3-phosphate + L-serine = D-glyceraldehyde 3-phosphate + L-tryptophan + H2O. It participates in amino-acid biosynthesis; L-tryptophan biosynthesis; L-tryptophan from chorismate: step 5/5. In terms of biological role, the beta subunit is responsible for the synthesis of L-tryptophan from indole and L-serine. In Streptomyces griseus subsp. griseus (strain JCM 4626 / CBS 651.72 / NBRC 13350 / KCC S-0626 / ISP 5235), this protein is Tryptophan synthase beta chain.